Consider the following 62-residue polypeptide: Protein YhjR (62 aa).

This Escherichia coli (strain K12) protein is Protein YhjR (yhjR).